The chain runs to 118 residues: Large ribosomal subunit protein uL18 (118 aa).

Belongs to the universal ribosomal protein uL18 family. Part of the 50S ribosomal subunit; part of the 5S rRNA/L5/L18/L25 subcomplex. Contacts the 5S and 23S rRNAs.

Functionally, this is one of the proteins that bind and probably mediate the attachment of the 5S RNA into the large ribosomal subunit, where it forms part of the central protuberance. The chain is Large ribosomal subunit protein uL18 from Rickettsia prowazekii (strain Madrid E).